We begin with the raw amino-acid sequence, 1150 residues long: PAN2-PAN3 deadenylation complex catalytic subunit PAN2 (1150 aa).

WD repeat units lie at residues 26–67 (AHHS…MEFQ), 114–156 (GHVN…ITKE), 158–194 (PAPN…VINT), and 290–328 (GHTH…VSFV). The linker stretch occupies residues 326-471 (SFVDQGLPVE…IRTDIESLKS (146 aa)). The region spanning 472–862 (VVPNMYHLFE…TPLVVMFQLK (391 aa)) is the USP domain. Positions 911–1079 (AIDAEFVLAK…HDSIEDANTA (169 aa)) constitute an Exonuclease domain. Residues aspartate 913, glutamate 915, aspartate 1022, and aspartate 1075 each contribute to the a divalent metal cation site. The interval 1118–1150 (GQSAQRTETPPMVDDAQPGALLPYQPPELLQGS) is disordered.

The protein belongs to the peptidase C19 family. PAN2 subfamily. In terms of assembly, forms a heterotrimer with an asymmetric homodimer of the regulatory subunit PAN3 to form the poly(A)-nuclease (PAN) deadenylation complex. A divalent metal cation is required as a cofactor.

It localises to the cytoplasm. It catalyses the reaction Exonucleolytic cleavage of poly(A) to 5'-AMP.. With respect to regulation, positively regulated by the regulatory subunit PAN3. Functionally, catalytic subunit of the poly(A)-nuclease (PAN) deadenylation complex, one of two cytoplasmic mRNA deadenylases involved in mRNA turnover. PAN specifically shortens poly(A) tails of RNA and the activity is stimulated by poly(A)-binding protein PAB1. PAN deadenylation is followed by rapid degradation of the shortened mRNA tails by the CCR4-NOT complex. Deadenylated mRNAs are then degraded by two alternative mechanisms, namely exosome-mediated 3'-5' exonucleolytic degradation, or deadenylation-dependent mRNA decaping and subsequent 5'-3' exonucleolytic degradation by XRN1. May also be involved in post-transcriptional maturation of mRNA poly(A) tails. In Pyricularia oryzae (strain 70-15 / ATCC MYA-4617 / FGSC 8958) (Rice blast fungus), this protein is PAN2-PAN3 deadenylation complex catalytic subunit PAN2.